The chain runs to 186 residues: Zinc finger AN1 domain-containing stress-associated protein 12 (186 aa).

2 AN1-type zinc fingers span residues 10-58 (PDLG…HGSR) and 97-147 (KKKK…INTA). Cysteine 16, cysteine 21, cysteine 31, cysteine 34, cysteine 39, histidine 42, histidine 48, cysteine 50, cysteine 103, cysteine 108, cysteine 120, cysteine 123, cysteine 128, histidine 131, histidine 137, and cysteine 139 together coordinate Zn(2+). The interval 167-186 (KGCGRGSSVSSKSSPSVRSF) is disordered. Residues 172-186 (GSSVSSKSSPSVRSF) are compositionally biased toward low complexity.

Functionally, may be involved in environmental stress response. This Arabidopsis thaliana (Mouse-ear cress) protein is Zinc finger AN1 domain-containing stress-associated protein 12 (SAP12).